Reading from the N-terminus, the 468-residue chain is Heparan-sulfate 6-O-sulfotransferase 2 (468 aa).

The Cytoplasmic segment spans residues Met-1–Arg-9. The chain crosses the membrane as a helical; Signal-anchor for type II membrane protein span at residues Leu-10–Ser-30. At Thr-31–Arg-468 the chain is on the lumenal side. Asn-79 is a glycosylation site (N-linked (GlcNAc...) asparagine). A 3'-phosphoadenylyl sulfate-binding site is contributed by His-103–Thr-111. Substrate contacts are provided by residues Lys-133 to Lys-134, Arg-150, Trp-155, and His-160. Residue His-160 is the Proton acceptor of the active site. Arg-197 and Ser-205 together coordinate 3'-phosphoadenylyl sulfate. Residues His-209 and Trp-216 each contribute to the substrate site. N-linked (GlcNAc...) asparagine glycosylation occurs at Asn-276. Thr-329 to Leu-331 serves as a coordination point for 3'-phosphoadenylyl sulfate. N-linked (GlcNAc...) asparagine glycosylation occurs at Asn-332. A 3'-phosphoadenylyl sulfate-binding site is contributed by Arg-335–Ala-336. Residues Phe-409–Asn-447 are disordered. Residues Ala-425–Glu-437 show a composition bias toward basic and acidic residues. Residues Ser-438–Asn-447 are compositionally biased toward acidic residues.

Belongs to the sulfotransferase 6 family. Expressed ubiquitously during gastrulation. During early somitogenesis, strong expression in head and presumptive brain. During mid-somitogenesis, strong expression in eye, hindbrain and somitic boundaries and weak expression in tail bud. During late somitogenesis, strong expression in eye, hindbrain, branchial arch primordia, spinal cord and ventral medial somites. At 24 hours post-fertilization (hpf), strong expression throughout the head, with expression receeding from the trunk spinal cord, ventral medial somites and somitic boundaries; expressed in cells surrounding vascular structures of the dorsal aorta and caudal vein in the tail. At 36 hpf, expressed in lens, optic stalk, hindbrain and pectoral fin. At 48 hpf, expressed in eye, brain, otic vesicle and branchial arches.

The protein resides in the membrane. It catalyses the reaction alpha-D-glucosaminyl-[heparan sulfate](n) + 3'-phosphoadenylyl sulfate = 6-sulfo-alpha-D-glucosaminyl-[heparan sulfate](n) + adenosine 3',5'-bisphosphate + H(+). Its function is as follows. 6-O-sulfation enzyme which catalyzes the transfer of sulfate from 3'-phosphoadenosine 5'-phosphosulfate (PAPS) to position 6 of the N-sulfoglucosamine residue (GlcNS) of heparan sulfate. Required for muscle development and angiogenesis. This is Heparan-sulfate 6-O-sulfotransferase 2 (hs6st2) from Danio rerio (Zebrafish).